The chain runs to 63 residues: DNA-directed RNA polymerase 7 kDa subunit (63 aa).

The protein belongs to the poxviridae DNA-directed RNA polymerase 7 kDa subunit family. The DNA-dependent RNA polymerase used for intermediate and late genes expression consists of eight subunits 147 kDa, 133 kDa, 35 kDa, 30 kDa, 22 kDa, 19 kDa, 18 kDa and 7 kDa totalling more than 500 kDa in mass. The same holoenzyme, with the addition of the transcription-specificity factor RAP94, is used for early gene expression.

It is found in the virion. The enzyme catalyses RNA(n) + a ribonucleoside 5'-triphosphate = RNA(n+1) + diphosphate. Functionally, part of the DNA-dependent RNA polymerase which catalyzes the transcription of viral DNA into RNA using the four ribonucleoside triphosphates as substrates. Responsible for the transcription of early, intermediate and late genes. DNA-dependent RNA polymerase associates with the early transcription factor (ETF) thereby allowing the early genes transcription. Late transcription, and probably also intermediate transcription, require newly synthesized RNA polymerase. This Myxoma virus (strain Lausanne) (MYXV) protein is DNA-directed RNA polymerase 7 kDa subunit (RPO7).